We begin with the raw amino-acid sequence, 126 residues long: Aspartate 1-decarboxylase (126 aa).

S25 acts as the Schiff-base intermediate with substrate; via pyruvic acid in catalysis. At S25 the chain carries Pyruvic acid (Ser). T57 is a substrate binding site. The Proton donor role is filled by Y58. G73 to A75 contacts substrate.

It belongs to the PanD family. In terms of assembly, heterooctamer of four alpha and four beta subunits. Pyruvate is required as a cofactor. In terms of processing, is synthesized initially as an inactive proenzyme, which is activated by self-cleavage at a specific serine bond to produce a beta-subunit with a hydroxyl group at its C-terminus and an alpha-subunit with a pyruvoyl group at its N-terminus.

Its subcellular location is the cytoplasm. It catalyses the reaction L-aspartate + H(+) = beta-alanine + CO2. Its pathway is cofactor biosynthesis; (R)-pantothenate biosynthesis; beta-alanine from L-aspartate: step 1/1. Functionally, catalyzes the pyruvoyl-dependent decarboxylation of aspartate to produce beta-alanine. The chain is Aspartate 1-decarboxylase from Stenotrophomonas maltophilia (strain K279a).